Reading from the N-terminus, the 125-residue chain is Calcitonin gene-related peptide 1 (125 aa).

An N-terminal signal peptide occupies residues M1–A25. Positions A26–Q77 are excised as a propeptide. C81 and C86 are disulfide-bonded. Position 116 is a phenylalanine amide (F116). A propeptide spanning residues S122 to I125 is cleaved from the precursor.

The protein belongs to the calcitonin family.

The protein resides in the secreted. Its function is as follows. CGRP1/CALCA is a peptide hormone that induces vasodilation mediated by the CALCRL-RAMP1 receptor complex. Dilates a variety of vessels including the coronary, cerebral and systemic vasculature. Its abundance in the CNS also points toward a neurotransmitter or neuromodulator role. It also elevates platelet cAMP. CGRP1 can also bind and activate CALCR-RAMP1 (AMYR1) receptor complex. This Gallus gallus (Chicken) protein is Calcitonin gene-related peptide 1 (CALCA).